The chain runs to 29 residues: Brevinin-2Ed (29 aa).

Cysteine 23 and cysteine 29 are disulfide-bonded.

This sequence belongs to the frog skin active peptide (FSAP) family. Brevinin subfamily. As to expression, expressed by the skin glands.

It localises to the secreted. Functionally, shows antibacterial activity against representative Gram-negative and Gram-positive bacterial species, and hemolytic activity. The protein is Brevinin-2Ed of Pelophylax lessonae (Pool frog).